Reading from the N-terminus, the 406-residue chain is Homocitrate synthase AksA (406 aa).

Positions Ile-32–Pro-285 constitute a Pyruvate carboxyltransferase domain.

The protein belongs to the alpha-IPM synthase/homocitrate synthase family.

The enzyme catalyses acetyl-CoA + 2-oxoglutarate + H2O = (2R)-homocitrate + CoA + H(+). It catalyses the reaction 2-oxoadipate + acetyl-CoA + H2O = (R)-dihomocitrate + CoA + H(+). The catalysed reaction is 2-oxoheptanedioate + acetyl-CoA + H2O = (R)-trihomocitrate + CoA + H(+). Its pathway is organic acid metabolism; 2-oxosuberate biosynthesis. Its function is as follows. Catalyzes the condensation of alpha-ketoglutarate and acetyl-CoA to form (R)-homocitrate. Can also catalyze the condensation of alpha-ketoadipate with acetyl-CoA to form (R)-homo(2)citrate, and the condensation of alpha-ketopimelate with acetyl-CoA to form (R)-homo(3)citrate. These reactions are part of the biosynthesis pathway of coenzyme B and biotin. The sequence is that of Homocitrate synthase AksA (aksA) from Methanocaldococcus jannaschii (strain ATCC 43067 / DSM 2661 / JAL-1 / JCM 10045 / NBRC 100440) (Methanococcus jannaschii).